A 423-amino-acid chain; its full sequence is Galactosylceramide sulfotransferase (423 aa).

Topologically, residues Met1 to Lys12 are cytoplasmic. Residues Ala13–Pro35 traverse the membrane as a helical; Signal-anchor for type II membrane protein segment. The Lumenal segment spans residues Pro36–Trp423. Residues Asn66 and Asn312 are each glycosylated (N-linked (GlcNAc...) asparagine).

The protein belongs to the galactose-3-O-sulfotransferase family. As to expression, expressed in brain, testis, kidney, stomach, small intestine, liver, and lung. Not detected in heart, skeletal muscle, and spleen.

It is found in the golgi apparatus membrane. It catalyses the reaction a beta-D-galactosyl-(1&lt;-&gt;1')-N-acylsphing-4-enine + 3'-phosphoadenylyl sulfate = an N-acyl-1-beta-D-(3-O-sulfo)-galactosyl-sphing-4-enine + adenosine 3',5'-bisphosphate + H(+). The catalysed reaction is a 1-O-alkyl-2-acyl-3-O-(beta-D-galactosyl)-sn-glycerol + 3'-phosphoadenylyl sulfate = a 1-O-alkyl-2-acyl-3-(beta-D-3-sulfogalactosyl)-sn-glycerol + adenosine 3',5'-bisphosphate + H(+). The enzyme catalyses a beta-D-Gal-(1&lt;-&gt;1')-ceramide + 3'-phosphoadenylyl sulfate = 1-(3-O-sulfo-beta-D-galactosyl)-ceramide + adenosine 3',5'-bisphosphate + H(+). It carries out the reaction a 1,2-diacyl-3-O-(beta-D-galactosyl)-sn-glycerol + 3'-phosphoadenylyl sulfate = 1,2-diacyl-3-(3-O-sulfo-beta-D-galactosyl)-sn-glycerol + adenosine 3',5'-bisphosphate + H(+). It catalyses the reaction a beta-D-Gal-(1-&gt;4)-beta-D-Glc-(1&lt;-&gt;1)-Cer(d18:1(4E)) + 3'-phosphoadenylyl sulfate = beta-D-3-sulfogalactosyl-(1-&gt;4)-beta-D-glucosyl-(1&lt;-&gt;1')-N-acylsphing-4-enine + adenosine 3',5'-bisphosphate + H(+). It participates in lipid metabolism; sphingolipid metabolism. Catalyzes the transfer of a sulfate group to position 3 of non-reducing beta-galactosyl residues in glycerolipids and sphingolipids, therefore participates in the biosynthesis of sulfoglycolipids. Catalyzes the synthesis of galactosylceramide sulfate (sulfatide), a major lipid component of the myelin sheath and of monogalactosylalkylacylglycerol sulfate (seminolipid), present in spermatocytes. Seems to prefer beta-glycosides at the non-reducing termini of sugar chains attached to a lipid moiety. Also acts on lactosylceramide, galactosyl 1-alkyl-2-sn-glycerol and galactosyl diacylglycerol (in vitro). The polypeptide is Galactosylceramide sulfotransferase (Mus musculus (Mouse)).